The chain runs to 501 residues: uncharacterized protein (501 aa).

The next 7 helical transmembrane spans lie at 14–34 (AIFI…SGSV), 73–93 (FILF…LGYM), 111–131 (IFGI…ICIF), 197–217 (FIIA…VLLI), 274–294 (ILLS…YYFG), 297–317 (FNLI…YNLI), and 466–486 (FLVL…RLIL).

The protein localises to the membrane. This is an uncharacterized protein from Dictyostelium discoideum (Social amoeba).